The primary structure comprises 464 residues: Phosphoglucosamine mutase (464 aa).

S112 serves as the catalytic Phosphoserine intermediate. Mg(2+)-binding residues include S112, D252, D254, and D256. S112 is modified (phosphoserine).

Belongs to the phosphohexose mutase family. Mg(2+) is required as a cofactor. Activated by phosphorylation.

The enzyme catalyses alpha-D-glucosamine 1-phosphate = D-glucosamine 6-phosphate. Functionally, catalyzes the conversion of glucosamine-6-phosphate to glucosamine-1-phosphate. This is Phosphoglucosamine mutase from Synechococcus sp. (strain CC9902).